Reading from the N-terminus, the 100-residue chain is Urease subunit gamma (100 aa).

The protein belongs to the urease gamma subunit family. Heterotrimer of UreA (gamma), UreB (beta) and UreC (alpha) subunits. Three heterotrimers associate to form the active enzyme.

It localises to the cytoplasm. The catalysed reaction is urea + 2 H2O + H(+) = hydrogencarbonate + 2 NH4(+). It functions in the pathway nitrogen metabolism; urea degradation; CO(2) and NH(3) from urea (urease route): step 1/1. This chain is Urease subunit gamma, found in Shewanella halifaxensis (strain HAW-EB4).